The following is a 248-amino-acid chain: MEWHDEGIVLGTRRHGESSVILEAITAAHGRHLGLVRGGRSKRMQPVLQPGNRVDLTWRARLDEHLGLFQVEPLELNAARLLNSAVAIYGIQLLAAHLRLLPERDPHPGLFEALGVIAAHLDEPETAGVLVARFELAVLDALGFGLDLARCAVTGSREDLAYVSPKTGRAVTREAGAPWADKLLPLPTFLTAGNEALYDRAILSQAFALTGFFFARHVYEPRGLTEPEARAGFLAAVMRNLPEGESAP.

The protein belongs to the RecO family.

Functionally, involved in DNA repair and RecF pathway recombination. This chain is DNA repair protein RecO, found in Chelativorans sp. (strain BNC1).